Consider the following 265-residue polypeptide: S-adenosylmethionine decarboxylase proenzyme (265 aa).

S114 serves as the catalytic Schiff-base intermediate with substrate; via pyruvic acid. Position 114 is a pyruvic acid (Ser); by autocatalysis (S114). The Proton acceptor; for processing activity role is filled by H119. C142 serves as the catalytic Proton donor; for catalytic activity.

This sequence belongs to the prokaryotic AdoMetDC family. Type 2 subfamily. As to quaternary structure, heterooctamer of four alpha and four beta chains arranged as a tetramer of alpha/beta heterodimers. It depends on pyruvate as a cofactor. Is synthesized initially as an inactive proenzyme. Formation of the active enzyme involves a self-maturation process in which the active site pyruvoyl group is generated from an internal serine residue via an autocatalytic post-translational modification. Two non-identical subunits are generated from the proenzyme in this reaction, and the pyruvate is formed at the N-terminus of the alpha chain, which is derived from the carboxyl end of the proenzyme. The post-translation cleavage follows an unusual pathway, termed non-hydrolytic serinolysis, in which the side chain hydroxyl group of the serine supplies its oxygen atom to form the C-terminus of the beta chain, while the remainder of the serine residue undergoes an oxidative deamination to produce ammonia and the pyruvoyl group blocking the N-terminus of the alpha chain.

The catalysed reaction is S-adenosyl-L-methionine + H(+) = S-adenosyl 3-(methylsulfanyl)propylamine + CO2. Its pathway is amine and polyamine biosynthesis; S-adenosylmethioninamine biosynthesis; S-adenosylmethioninamine from S-adenosyl-L-methionine: step 1/1. In terms of biological role, catalyzes the decarboxylation of S-adenosylmethionine to S-adenosylmethioninamine (dcAdoMet), the propylamine donor required for the synthesis of the polyamines spermine and spermidine from the diamine putrescine. This chain is S-adenosylmethionine decarboxylase proenzyme, found in Buchnera aphidicola subsp. Acyrthosiphon pisum (strain APS) (Acyrthosiphon pisum symbiotic bacterium).